The sequence spans 216 residues: CASP-like protein 2U1 (216 aa).

The interval 1–30 (MKQDTEMGEATNGYIGTPGTVPVSHAGNDS) is disordered. Residues 1-37 (MKQDTEMGEATNGYIGTPGTVPVSHAGNDSGMRRMRT) are Cytoplasmic-facing. The chain crosses the membrane as a helical span at residues 38 to 58 (ASILMRLTAMALCVTALVTMV). At 59 to 86 (TDKQTHYFNFASTTIVKTAEYTNVLALK) the chain is on the extracellular side. Residues 87-107 (VFVYTNGVIAGYSLLQALWTI) traverse the membrane as a helical segment. Topologically, residues 108 to 128 (VAKSSYSTSKARLWTTFFLDQ) are cytoplasmic. A helical membrane pass occupies residues 129–148 (FIVYVLIGVTGAATEVAYIA). The Extracellular portion of the chain corresponds to 149–170 (EKGESDVAWPKQCNNFGRFCSQ). The helical transmembrane segment at 171–191 (VGASVIVCFVAILTLVFLAVL) threads the bilayer. Residues 192–216 (SAKQLFIHERPSRTTRKDGYYTSNQ) lie on the Cytoplasmic side of the membrane.

Belongs to the Casparian strip membrane proteins (CASP) family. As to quaternary structure, homodimer and heterodimers.

The protein localises to the cell membrane. The chain is CASP-like protein 2U1 from Marchantia polymorpha (Common liverwort).